Consider the following 258-residue polypeptide: Glutamate racemase (258 aa).

Residues 11-12 (DS) and 43-44 (YG) contribute to the substrate site. Cys-74 functions as the Proton donor/acceptor in the catalytic mechanism. 75–76 (NT) is a binding site for substrate. Catalysis depends on Cys-187, which acts as the Proton donor/acceptor. 188-189 (TH) is a substrate binding site.

The protein belongs to the aspartate/glutamate racemases family.

It carries out the reaction L-glutamate = D-glutamate. It functions in the pathway cell wall biogenesis; peptidoglycan biosynthesis. Provides the (R)-glutamate required for cell wall biosynthesis. In Bifidobacterium animalis subsp. lactis (strain AD011), this protein is Glutamate racemase.